The chain runs to 330 residues: DNA-directed RNA polymerase subunit alpha (330 aa).

Positions 1–229 are alpha N-terminal domain (alpha-NTD); the sequence is MKNIKFIKPF…DHFNVLVELS (229 aa). The interval 245–330 is alpha C-terminal domain (alpha-CTD); it reads AHNSVLDLEI…HSVEEDKDKH (86 aa).

This sequence belongs to the RNA polymerase alpha chain family. As to quaternary structure, homodimer. The RNAP catalytic core consists of 2 alpha, 1 beta, 1 beta' and 1 omega subunit. When a sigma factor is associated with the core the holoenzyme is formed, which can initiate transcription.

The enzyme catalyses RNA(n) + a ribonucleoside 5'-triphosphate = RNA(n+1) + diphosphate. DNA-dependent RNA polymerase catalyzes the transcription of DNA into RNA using the four ribonucleoside triphosphates as substrates. The polypeptide is DNA-directed RNA polymerase subunit alpha (Onion yellows phytoplasma (strain OY-M)).